The sequence spans 226 residues: Lipoprotein-releasing system ATP-binding protein LolD (226 aa).

The ABC transporter domain occupies 5–226; sequence LRCEKISKFY…MADGVLREAS (222 aa). 41–48 contacts ATP; sequence GSSGSGKS.

It belongs to the ABC transporter superfamily. Lipoprotein translocase (TC 3.A.1.125) family. In terms of assembly, the complex is composed of two ATP-binding proteins (LolD) and two transmembrane proteins (LolC and LolE).

The protein localises to the cell inner membrane. In terms of biological role, part of the ABC transporter complex LolCDE involved in the translocation of mature outer membrane-directed lipoproteins, from the inner membrane to the periplasmic chaperone, LolA. Responsible for the formation of the LolA-lipoprotein complex in an ATP-dependent manner. This is Lipoprotein-releasing system ATP-binding protein LolD from Haemophilus ducreyi (strain 35000HP / ATCC 700724).